Consider the following 141-residue polypeptide: Hemoglobin subunit alpha-A (141 aa).

Positions 1 to 141 (VLSAADKTNV…VGTVLTAKYR (141 aa)) constitute a Globin domain. Histidine 58 provides a ligand contact to O2. Histidine 87 lines the heme b pocket.

This sequence belongs to the globin family. Heterotetramer of two alpha chains and two beta chains. As to expression, red blood cells.

In terms of biological role, involved in oxygen transport from the lung to the various peripheral tissues. The sequence is that of Hemoglobin subunit alpha-A (HBAA) from Turdus merula (Common blackbird).